The primary structure comprises 274 residues: Glutamate racemase (274 aa).

Residues 9 to 10 and 41 to 42 each bind substrate; these read DS and YG. Cysteine 72 acts as the Proton donor/acceptor in catalysis. Residue 73 to 74 participates in substrate binding; sequence NT. The active-site Proton donor/acceptor is the cysteine 184. 185 to 186 contacts substrate; it reads TH.

This sequence belongs to the aspartate/glutamate racemases family.

It carries out the reaction L-glutamate = D-glutamate. Its pathway is cell wall biogenesis; peptidoglycan biosynthesis. Provides the (R)-glutamate required for cell wall biosynthesis. The polypeptide is Glutamate racemase (Oceanobacillus iheyensis (strain DSM 14371 / CIP 107618 / JCM 11309 / KCTC 3954 / HTE831)).